The following is a 669-amino-acid chain: DNA mismatch repair protein MutL (669 aa).

The segment at 361–409 is disordered; that stretch reads ENVFSQPYQAPVTSSTQKKSTGAYQGSAGKGLTDTQKSPQKTLDTRQFG. 2 stretches are compositionally biased toward polar residues: residues 363–384 and 393–402; these read VFSQ…TGAY and TDTQKSPQKT.

It belongs to the DNA mismatch repair MutL/HexB family.

Functionally, this protein is involved in the repair of mismatches in DNA. It is required for dam-dependent methyl-directed DNA mismatch repair. May act as a 'molecular matchmaker', a protein that promotes the formation of a stable complex between two or more DNA-binding proteins in an ATP-dependent manner without itself being part of a final effector complex. The sequence is that of DNA mismatch repair protein MutL from Proteus mirabilis (strain HI4320).